We begin with the raw amino-acid sequence, 763 residues long: Cyclin-F (763 aa).

Positions 19-27 match the Nuclear localization signal 1 motif; it reads KRRVKRRPR. The region spanning 28–75 is the F-box domain; the sequence is VLTLLSLPEDVLLYVLECLPAVDILSMREVHPHLRSLVDSHSSVWARA. The Cyclin N-terminal domain occupies 299 to 411; that stretch reads INKTSIFTTQ…EIISALEGKI (113 aa). 2 short sequence motifs (d box) span residues 316–319 and 355–358; these read RYIL and RAKL. Disordered stretches follow at residues 574 to 600 and 677 to 763; these read GSKT…TAEL and KLEN…SDEL. The Nuclear localization signal 2 motif lies at 575-581; it reads SKTKRRR. The segment covering 580–590 has biased composition (basic and acidic residues); that stretch reads RREDSIQEDRG. Residues 589–747 form a PEST region; sequence RGSFVTTPTA…LFKASRRQVK (159 aa). The segment covering 692–710 has biased composition (low complexity); sequence SSGYSSVSSGGSPTSSSSP. A compositionally biased stretch (basic residues) spans 741–751; that stretch reads ASRRQVKRKNQ.

Belongs to the cyclin family. Cyclin AB subfamily. As to quaternary structure, component of the SCF(CCNF) complex.

The protein resides in the nucleus. Its subcellular location is the cytoplasm. It is found in the perinuclear region. It localises to the cytoskeleton. The protein localises to the microtubule organizing center. The protein resides in the centrosome. Its subcellular location is the centriole. Its function is as follows. Substrate recognition component of the SCF(CCNF) E3 ubiquitin-protein ligase complex which mediates the ubiquitination and subsequent proteasomal degradation of target proteins. The SCF(CCNF) E3 ubiquitin-protein ligase complex is an integral component of the ubiquitin proteasome system (UPS) and links proteasome degradation to the cell cycle. Mediates the substrate recognition and the proteasomal degradation of various target proteins during G2 phase involved in the regulation of cell cycle progression and in the maintenance of genome stability. This chain is Cyclin-F (ccnf), found in Xenopus tropicalis (Western clawed frog).